Consider the following 113-residue polypeptide: Prefoldin subunit beta (113 aa).

Belongs to the prefoldin subunit beta family. As to quaternary structure, heterohexamer of two alpha and four beta subunits.

It localises to the cytoplasm. Functionally, molecular chaperone capable of stabilizing a range of proteins. Seems to fulfill an ATP-independent, HSP70-like function in archaeal de novo protein folding. In Methanococcus maripaludis (strain C7 / ATCC BAA-1331), this protein is Prefoldin subunit beta.